A 308-amino-acid chain; its full sequence is ATP synthase gamma chain (308 aa).

The protein belongs to the ATPase gamma chain family. In terms of assembly, F-type ATPases have 2 components, CF(1) - the catalytic core - and CF(0) - the membrane proton channel. CF(1) has five subunits: alpha(3), beta(3), gamma(1), delta(1), epsilon(1). CF(0) has three main subunits: a, b and c.

It is found in the cell inner membrane. Produces ATP from ADP in the presence of a proton gradient across the membrane. The gamma chain is believed to be important in regulating ATPase activity and the flow of protons through the CF(0) complex. In Salinibacter ruber (strain DSM 13855 / M31), this protein is ATP synthase gamma chain.